Reading from the N-terminus, the 541-residue chain is Membrane protein insertase YidC (541 aa).

5 helical membrane-spanning segments follow: residues 6 to 26, 349 to 369, 420 to 440, 457 to 477, and 500 to 520; these read NILL…WQAD, FVGN…GLLF, GGCL…WVLL, LSVQ…MFVM, and VIFT…WLVG.

It belongs to the OXA1/ALB3/YidC family. Type 1 subfamily. As to quaternary structure, interacts with the Sec translocase complex via SecD. Specifically interacts with transmembrane segments of nascent integral membrane proteins during membrane integration.

It is found in the cell inner membrane. Its function is as follows. Required for the insertion and/or proper folding and/or complex formation of integral membrane proteins into the membrane. Involved in integration of membrane proteins that insert both dependently and independently of the Sec translocase complex, as well as at least some lipoproteins. Aids folding of multispanning membrane proteins. This chain is Membrane protein insertase YidC, found in Shewanella sp. (strain MR-7).